A 67-amino-acid chain; its full sequence is Small ribosomal subunit protein bS21 (67 aa).

It belongs to the bacterial ribosomal protein bS21 family.

This Magnetococcus marinus (strain ATCC BAA-1437 / JCM 17883 / MC-1) protein is Small ribosomal subunit protein bS21.